We begin with the raw amino-acid sequence, 72 residues long: Translation initiation factor IF-1 (72 aa).

The S1-like domain maps to 1–72 (MAKEDCIEME…SKGRIIYRAR (72 aa)).

The protein belongs to the IF-1 family. As to quaternary structure, component of the 30S ribosomal translation pre-initiation complex which assembles on the 30S ribosome in the order IF-2 and IF-3, IF-1 and N-formylmethionyl-tRNA(fMet); mRNA recruitment can occur at any time during PIC assembly.

It localises to the cytoplasm. In terms of biological role, one of the essential components for the initiation of protein synthesis. Stabilizes the binding of IF-2 and IF-3 on the 30S subunit to which N-formylmethionyl-tRNA(fMet) subsequently binds. Helps modulate mRNA selection, yielding the 30S pre-initiation complex (PIC). Upon addition of the 50S ribosomal subunit IF-1, IF-2 and IF-3 are released leaving the mature 70S translation initiation complex. The polypeptide is Translation initiation factor IF-1 (Pseudoalteromonas atlantica (strain T6c / ATCC BAA-1087)).